The primary structure comprises 177 residues: Putative 3-methyladenine DNA glycosylase (177 aa).

Belongs to the DNA glycosylase MPG family.

This is Putative 3-methyladenine DNA glycosylase from Rickettsia felis (strain ATCC VR-1525 / URRWXCal2) (Rickettsia azadi).